The following is a 282-amino-acid chain: Bifunctional protein FolD 2 (282 aa).

Residues 165-167 and Ser190 each bind NADP(+); that span reads GRS.

The protein belongs to the tetrahydrofolate dehydrogenase/cyclohydrolase family. In terms of assembly, homodimer.

The catalysed reaction is (6R)-5,10-methylene-5,6,7,8-tetrahydrofolate + NADP(+) = (6R)-5,10-methenyltetrahydrofolate + NADPH. It catalyses the reaction (6R)-5,10-methenyltetrahydrofolate + H2O = (6R)-10-formyltetrahydrofolate + H(+). It participates in one-carbon metabolism; tetrahydrofolate interconversion. Catalyzes the oxidation of 5,10-methylenetetrahydrofolate to 5,10-methenyltetrahydrofolate and then the hydrolysis of 5,10-methenyltetrahydrofolate to 10-formyltetrahydrofolate. The sequence is that of Bifunctional protein FolD 2 from Acinetobacter baylyi (strain ATCC 33305 / BD413 / ADP1).